Reading from the N-terminus, the 79-residue chain is Scutelatoxin (79 aa).

Positions 1-21 (MKTLLLTLVVMTIMCLDLGYT) are cleaved as a signal peptide. Intrachain disulfides connect C24–C41, C34–C59, C63–C71, and C72–C77.

Belongs to the three-finger toxin family. Short-chain subfamily. Expressed by the venom gland.

Its subcellular location is the secreted. This is Scutelatoxin from Oxyuranus scutellatus scutellatus (Australian taipan).